Reading from the N-terminus, the 81-residue chain is Photosystem I iron-sulfur center (81 aa).

4Fe-4S ferredoxin-type domains are found at residues 1-31 (MAHS…MVPW) and 39-68 (IASA…VRVY). 8 residues coordinate [4Fe-4S] cluster: cysteine 11, cysteine 14, cysteine 17, cysteine 21, cysteine 48, cysteine 51, cysteine 54, and cysteine 58.

In terms of assembly, the eukaryotic PSI reaction center is composed of at least 11 subunits. The cofactor is [4Fe-4S] cluster.

The protein resides in the plastid. It is found in the chloroplast thylakoid membrane. It catalyses the reaction reduced [plastocyanin] + hnu + oxidized [2Fe-2S]-[ferredoxin] = oxidized [plastocyanin] + reduced [2Fe-2S]-[ferredoxin]. Apoprotein for the two 4Fe-4S centers FA and FB of photosystem I (PSI); essential for photochemical activity. FB is the terminal electron acceptor of PSI, donating electrons to ferredoxin. The C-terminus interacts with PsaA/B/D and helps assemble the protein into the PSI complex. Required for binding of PsaD and PsaE to PSI. PSI is a plastocyanin-ferredoxin oxidoreductase, converting photonic excitation into a charge separation, which transfers an electron from the donor P700 chlorophyll pair to the spectroscopically characterized acceptors A0, A1, FX, FA and FB in turn. This chain is Photosystem I iron-sulfur center, found in Welwitschia mirabilis (Tree tumbo).